The following is a 123-amino-acid chain: UPF0426 protein At1g28150, chloroplastic (123 aa).

The N-terminal 26 residues, 1 to 26, are a transit peptide targeting the chloroplast; sequence MGFVLICTCPPSSGVVVSQLHHHQFS. The interval 97-123 is disordered; it reads SGITEEEVDADGVVSNDEDSPQQIEIE. The span at 100-123 shows a compositional bias: acidic residues; the sequence is TEEEVDADGVVSNDEDSPQQIEIE.

This sequence belongs to the UPF0426 family.

It localises to the plastid. The protein resides in the chloroplast. The protein localises to the plastoglobule. The polypeptide is UPF0426 protein At1g28150, chloroplastic (Arabidopsis thaliana (Mouse-ear cress)).